The following is a 78-amino-acid chain: Small ribosomal subunit protein bS18 (78 aa).

The protein belongs to the bacterial ribosomal protein bS18 family. In terms of assembly, part of the 30S ribosomal subunit. Forms a tight heterodimer with protein bS6.

Binds as a heterodimer with protein bS6 to the central domain of the 16S rRNA, where it helps stabilize the platform of the 30S subunit. The protein is Small ribosomal subunit protein bS18 of Kineococcus radiotolerans (strain ATCC BAA-149 / DSM 14245 / SRS30216).